We begin with the raw amino-acid sequence, 567 residues long: Platelet glycoprotein V (567 aa).

The N-terminal stretch at 1 to 16 (MLRSALLSAVLPLLRA) is a signal peptide. The LRRNT domain maps to 17 to 50 (QPFPCPKTCKCVVRDAAQCSGGSVAHIAELGLPT). At 17–522 (QPFPCPKTCK…ESPNNRLYWG (506 aa)) the chain is on the extracellular side. 2 N-linked (GlcNAc...) asparagine glycosylation sites follow: asparagine 51 and asparagine 67. 14 LRR repeats span residues 75–96 (VLQR…TFND), 99–120 (KLKT…ILDK), 123–144 (LLEQ…LFQQ), 147–168 (NLQE…LFSS), 171–193 (ELKL…LGAQ), 195–216 (KLEK…LLSN), 219–240 (ALTE…AFDR), 243–264 (NLSS…LFLH), 267–288 (SVSR…LFGE), 291–312 (GLRE…AFRN), 315–337 (GLQT…VFQG), 340–361 (ELRV…ALRG), 364–385 (HLRQ…LFRN), and 388–409 (SLES…VFAA). Asparagine 181 is a glycosylation site (N-linked (GlcNAc...) asparagine). Asparagine 243 is a glycosylation site (N-linked (GlcNAc...) asparagine). Asparagine 298 and asparagine 312 each carry an N-linked (GlcNAc...) asparagine glycan. Asparagine 385 carries N-linked (GlcNAc...) asparagine glycosylation. One can recognise an LRRCT domain in the interval 421–474 (NPWLCDCGLWRFLQWLRHHPDILGRDEPPQCRGPEPRASLSFWELLQGDPWCPD). Residues 523–543 (LYILLLVAQAIIAAFIVFAMI) traverse the membrane as a helical segment. Topologically, residues 544 to 567 (KIGQLFRTLIREKLLLEAMGKSCN) are cytoplasmic.

The protein localises to the membrane. The GPIb-V-IX complex functions as the vWF receptor and mediates vWF-dependent platelet adhesion to blood vessels. The adhesion of platelets to injured vascular surfaces in the arterial circulation is a critical initiating event in hemostasis. The chain is Platelet glycoprotein V (Gp5) from Mus musculus (Mouse).